The primary structure comprises 410 residues: Extracellular serine proteinase (410 aa).

A signal peptide spans 1 to 19 (MKRGGLWLLLGLLVLSACS). The propeptide occupies 20–132 (SNPPAASTQE…IEADQEVRAF (113 aa)). The 86-residue stretch at 45 to 130 (YIVVYKENAD…AYIEADQEVR (86 aa)) folds into the Inhibitor I9 domain. Residues 139-410 (TWGLDRIDQR…SPNLLLYTPF (272 aa)) form the Peptidase S8 domain. Residues aspartate 171, histidine 204, and serine 356 each act as charge relay system in the active site.

This sequence belongs to the peptidase S8 family. In terms of processing, contains 4 Cys residues that form two disulfide bonds. Post-translationally, glycosylated. This proteinase has a 0.7% carbohydrate content.

The protein localises to the secreted. Its function is as follows. Serine proteinase with preferred activity for amino acids with aromatic side groups at the P1' side of the scissible bond. This Thermus sp. (strain Rt41A) protein is Extracellular serine proteinase.